Here is a 352-residue protein sequence, read N- to C-terminus: S-adenosylmethionine:tRNA ribosyltransferase-isomerase (352 aa).

It belongs to the QueA family. In terms of assembly, monomer.

Its subcellular location is the cytoplasm. The catalysed reaction is 7-aminomethyl-7-carbaguanosine(34) in tRNA + S-adenosyl-L-methionine = epoxyqueuosine(34) in tRNA + adenine + L-methionine + 2 H(+). It functions in the pathway tRNA modification; tRNA-queuosine biosynthesis. In terms of biological role, transfers and isomerizes the ribose moiety from AdoMet to the 7-aminomethyl group of 7-deazaguanine (preQ1-tRNA) to give epoxyqueuosine (oQ-tRNA). The chain is S-adenosylmethionine:tRNA ribosyltransferase-isomerase from Paraburkholderia phytofirmans (strain DSM 17436 / LMG 22146 / PsJN) (Burkholderia phytofirmans).